We begin with the raw amino-acid sequence, 416 residues long: uncharacterized protein (416 aa).

4 residues coordinate [4Fe-4S] cluster: Cys-63, Cys-75, Cys-78, and Cys-152. S-adenosyl-L-methionine is bound by residues Gln-253, Phe-280, Glu-300, and Asp-348. The Nucleophile role is filled by Cys-374.

It belongs to the class I-like SAM-binding methyltransferase superfamily. RNA M5U methyltransferase family.

This is an uncharacterized protein from Agrobacterium fabrum (strain C58 / ATCC 33970) (Agrobacterium tumefaciens (strain C58)).